Reading from the N-terminus, the 274-residue chain is Dermonecrotic toxin SdSicTox-betaIIB1ai (274 aa).

His-5 is an active-site residue. The Mg(2+) site is built by Glu-25 and Asp-27. His-41 acts as the Nucleophile in catalysis. 2 disulfides stabilise this stretch: Cys-45–Cys-51 and Cys-47–Cys-190. Asp-85 is a binding site for Mg(2+).

It belongs to the arthropod phospholipase D family. Class II subfamily. Mg(2+) is required as a cofactor. Expressed by the venom gland.

It is found in the secreted. It catalyses the reaction an N-(acyl)-sphingosylphosphocholine = an N-(acyl)-sphingosyl-1,3-cyclic phosphate + choline. It carries out the reaction an N-(acyl)-sphingosylphosphoethanolamine = an N-(acyl)-sphingosyl-1,3-cyclic phosphate + ethanolamine. The catalysed reaction is a 1-acyl-sn-glycero-3-phosphocholine = a 1-acyl-sn-glycero-2,3-cyclic phosphate + choline. The enzyme catalyses a 1-acyl-sn-glycero-3-phosphoethanolamine = a 1-acyl-sn-glycero-2,3-cyclic phosphate + ethanolamine. Functionally, dermonecrotic toxins cleave the phosphodiester linkage between the phosphate and headgroup of certain phospholipids (sphingolipid and lysolipid substrates), forming an alcohol (often choline) and a cyclic phosphate. This toxin acts on sphingomyelin (SM). It may also act on ceramide phosphoethanolamine (CPE), lysophosphatidylcholine (LPC) and lysophosphatidylethanolamine (LPE), but not on lysophosphatidylserine (LPS), and lysophosphatidylglycerol (LPG). It acts by transphosphatidylation, releasing exclusively cyclic phosphate products as second products. Induces dermonecrosis, hemolysis, increased vascular permeability, edema, inflammatory response, and platelet aggregation. This chain is Dermonecrotic toxin SdSicTox-betaIIB1ai, found in Sicarius cf. damarensis (strain GJB-2008) (Six-eyed sand spider).